Reading from the N-terminus, the 302-residue chain is Glutaminase (302 aa).

Residues S61, N111, E155, N162, Y186, Y238, and V256 each contribute to the substrate site.

Belongs to the glutaminase family. Homotetramer.

It catalyses the reaction L-glutamine + H2O = L-glutamate + NH4(+). The protein is Glutaminase of Pseudomonas fluorescens (strain SBW25).